The sequence spans 36 residues: DLIDVKCISSQECWIACKKVTGRFEGKCQNRQCRCY.

3 disulfides stabilise this stretch: Cys-7–Cys-28, Cys-13–Cys-33, and Cys-17–Cys-35.

Belongs to the short scorpion toxin superfamily. Potassium channel inhibitor family. Alpha-KTx 16 subfamily. Expressed by the venom gland.

It is found in the secreted. Its function is as follows. Blocks calcium-activated potassium channels. This chain is Potassium channel toxin alpha-KTx 16.1, found in Hottentotta tamulus (Eastern Indian scorpion).